We begin with the raw amino-acid sequence, 234 residues long: RNA-binding protein pno1 (234 aa).

Positions 1–39 are disordered; that stretch reads MPTQDSAAKQADDGFQLVQKKSRKRKMTMDMDDADPKAG. Positions 158–207 constitute a KH domain; that stretch reads LARCIGRLAGKGGRTKFTIENVTKTRIVLADSKVHILGSYQNIRAARTAL.

This sequence belongs to the PNO1 family.

Its subcellular location is the nucleus. It is found in the nucleolus. In Ixodes scapularis (Black-legged tick), this protein is RNA-binding protein pno1.